Here is a 388-residue protein sequence, read N- to C-terminus: Succinate--CoA ligase [ADP-forming] subunit beta (388 aa).

The region spanning 9–244 (KSLFAEYGLP…PSQDDAREAH (236 aa)) is the ATP-grasp domain. Residues Lys46, 53-55 (GRG), Glu99, Thr102, and Glu107 contribute to the ATP site. Asn199 and Asp213 together coordinate Mg(2+). Substrate contacts are provided by residues Asn264 and 321–323 (GIV).

Belongs to the succinate/malate CoA ligase beta subunit family. As to quaternary structure, heterotetramer of two alpha and two beta subunits. It depends on Mg(2+) as a cofactor.

It catalyses the reaction succinate + ATP + CoA = succinyl-CoA + ADP + phosphate. The catalysed reaction is GTP + succinate + CoA = succinyl-CoA + GDP + phosphate. It functions in the pathway carbohydrate metabolism; tricarboxylic acid cycle; succinate from succinyl-CoA (ligase route): step 1/1. Succinyl-CoA synthetase functions in the citric acid cycle (TCA), coupling the hydrolysis of succinyl-CoA to the synthesis of either ATP or GTP and thus represents the only step of substrate-level phosphorylation in the TCA. The beta subunit provides nucleotide specificity of the enzyme and binds the substrate succinate, while the binding sites for coenzyme A and phosphate are found in the alpha subunit. The chain is Succinate--CoA ligase [ADP-forming] subunit beta from Shewanella sp. (strain MR-4).